Reading from the N-terminus, the 187-residue chain is Small ribosomal subunit protein uS5 (187 aa).

An S5 DRBM domain is found at 21–84 (MVDKLVHINR…ESAKRDMIFV (64 aa)).

It belongs to the universal ribosomal protein uS5 family. As to quaternary structure, part of the 30S ribosomal subunit. Contacts proteins S4 and S8.

In terms of biological role, with S4 and S12 plays an important role in translational accuracy. Its function is as follows. Located at the back of the 30S subunit body where it stabilizes the conformation of the head with respect to the body. This is Small ribosomal subunit protein uS5 from Mesorhizobium japonicum (strain LMG 29417 / CECT 9101 / MAFF 303099) (Mesorhizobium loti (strain MAFF 303099)).